A 211-amino-acid polypeptide reads, in one-letter code: Thiamine-phosphate synthase (211 aa).

4-amino-2-methyl-5-(diphosphooxymethyl)pyrimidine-binding positions include 36–40 (QLREK) and Asn68. Asp69 and Asp88 together coordinate Mg(2+). Ser107 contributes to the 4-amino-2-methyl-5-(diphosphooxymethyl)pyrimidine binding site. 133–135 (TGS) is a binding site for 2-[(2R,5Z)-2-carboxy-4-methylthiazol-5(2H)-ylidene]ethyl phosphate. Lys136 is a binding site for 4-amino-2-methyl-5-(diphosphooxymethyl)pyrimidine. Residues Gly167 and 187 to 188 (IT) contribute to the 2-[(2R,5Z)-2-carboxy-4-methylthiazol-5(2H)-ylidene]ethyl phosphate site.

This sequence belongs to the thiamine-phosphate synthase family. Requires Mg(2+) as cofactor.

It carries out the reaction 2-[(2R,5Z)-2-carboxy-4-methylthiazol-5(2H)-ylidene]ethyl phosphate + 4-amino-2-methyl-5-(diphosphooxymethyl)pyrimidine + 2 H(+) = thiamine phosphate + CO2 + diphosphate. It catalyses the reaction 2-(2-carboxy-4-methylthiazol-5-yl)ethyl phosphate + 4-amino-2-methyl-5-(diphosphooxymethyl)pyrimidine + 2 H(+) = thiamine phosphate + CO2 + diphosphate. The enzyme catalyses 4-methyl-5-(2-phosphooxyethyl)-thiazole + 4-amino-2-methyl-5-(diphosphooxymethyl)pyrimidine + H(+) = thiamine phosphate + diphosphate. The protein operates within cofactor biosynthesis; thiamine diphosphate biosynthesis; thiamine phosphate from 4-amino-2-methyl-5-diphosphomethylpyrimidine and 4-methyl-5-(2-phosphoethyl)-thiazole: step 1/1. Functionally, condenses 4-methyl-5-(beta-hydroxyethyl)thiazole monophosphate (THZ-P) and 2-methyl-4-amino-5-hydroxymethyl pyrimidine pyrophosphate (HMP-PP) to form thiamine monophosphate (TMP). The protein is Thiamine-phosphate synthase of Haloarcula marismortui (strain ATCC 43049 / DSM 3752 / JCM 8966 / VKM B-1809) (Halobacterium marismortui).